The sequence spans 164 residues: ATP synthase subunit b 2 (164 aa).

A helical transmembrane segment spans residues 4–24 (TFWAFVGLVLFLALLVYFEVP).

The protein belongs to the ATPase B chain family. In terms of assembly, F-type ATPases have 2 components, F(1) - the catalytic core - and F(0) - the membrane proton channel. F(1) has five subunits: alpha(3), beta(3), gamma(1), delta(1), epsilon(1). F(0) has three main subunits: a(1), b(2) and c(10-14). The alpha and beta chains form an alternating ring which encloses part of the gamma chain. F(1) is attached to F(0) by a central stalk formed by the gamma and epsilon chains, while a peripheral stalk is formed by the delta and b chains.

It is found in the cell inner membrane. F(1)F(0) ATP synthase produces ATP from ADP in the presence of a proton or sodium gradient. F-type ATPases consist of two structural domains, F(1) containing the extramembraneous catalytic core and F(0) containing the membrane proton channel, linked together by a central stalk and a peripheral stalk. During catalysis, ATP synthesis in the catalytic domain of F(1) is coupled via a rotary mechanism of the central stalk subunits to proton translocation. Functionally, component of the F(0) channel, it forms part of the peripheral stalk, linking F(1) to F(0). This chain is ATP synthase subunit b 2, found in Bartonella henselae (strain ATCC 49882 / DSM 28221 / CCUG 30454 / Houston 1) (Rochalimaea henselae).